Here is a 239-residue protein sequence, read N- to C-terminus: Yolk ferritin (239 aa).

The first 18 residues, 1-18 (MNSVLFLTLAVCSSLAYG), serve as a signal peptide directing secretion. Residues 27-217 (QNYKENINQL…HAITRLRSFE (191 aa)) enclose the Ferritin-like diiron domain. Residues Glu-44 and Glu-79 each coordinate Fe cation. Positions 105–146 (KDACETVMKFVTSDTSGLEEFRDRRMCICGFVATKTINDNCG) are insertion; not present in other ferritins. Glu-165 and Gln-199 together coordinate Fe cation.

Belongs to the ferritin family. In terms of assembly, oligomer of 12 or 24 subunits. The functional molecule is roughly spherical and contains a central cavity into which the polymeric ferric iron core is deposited. In terms of tissue distribution, midgut gland and bloodstream.

It localises to the secreted. It carries out the reaction 4 Fe(2+) + O2 + 4 H(+) = 4 Fe(3+) + 2 H2O. Stores iron in a soluble, non-toxic, readily available form. Important for iron homeostasis. Has ferroxidase activity. Iron is taken up in the ferrous form and deposited as ferric hydroxides after oxidation. The sequence is that of Yolk ferritin from Lymnaea stagnalis (Great pond snail).